A 539-amino-acid chain; its full sequence is Chaperonin GroEL (539 aa).

Residues 29–32, 86–90, glycine 413, 476–478, and aspartate 492 contribute to the ATP site; these read TIGP, DGTTT, and NAA.

The protein belongs to the chaperonin (HSP60) family. Forms a cylinder of 14 subunits composed of two heptameric rings stacked back-to-back. Interacts with the co-chaperonin GroES.

Its subcellular location is the cytoplasm. It catalyses the reaction ATP + H2O + a folded polypeptide = ADP + phosphate + an unfolded polypeptide.. Functionally, together with its co-chaperonin GroES, plays an essential role in assisting protein folding. The GroEL-GroES system forms a nano-cage that allows encapsulation of the non-native substrate proteins and provides a physical environment optimized to promote and accelerate protein folding. The sequence is that of Chaperonin GroEL from Staphylococcus haemolyticus (strain JCSC1435).